Consider the following 330-residue polypeptide: Glucokinase (330 aa).

Belongs to the ROK (NagC/XylR) family.

It is found in the cytoplasm. It carries out the reaction D-glucose + ATP = D-glucose 6-phosphate + ADP + H(+). This chain is Glucokinase (glcK), found in Halalkalibacterium halodurans (strain ATCC BAA-125 / DSM 18197 / FERM 7344 / JCM 9153 / C-125) (Bacillus halodurans).